The primary structure comprises 299 residues: Taste receptor type 2 member 4 (299 aa).

At 1-9 (MLRLFYFSA) the chain is on the extracellular side. The chain crosses the membrane as a helical span at residues 10 to 30 (IIASVILNFVGIIMNLFITVV). The Cytoplasmic segment spans residues 31 to 46 (NCKTWVKSHRISSSDR). A helical membrane pass occupies residues 47–67 (ILFSLGITRFLMLGLFLVNTI). Residues 68-81 (YFVSSNTERSVYLS) are Extracellular-facing. Residues 82–102 (AFFVLCFMFLDSSSVWFVTLL) form a helical membrane-spanning segment. The Cytoplasmic portion of the chain corresponds to 103 to 131 (NILYCVKITNFQHSVFLLLKRNISPKIPR). A helical membrane pass occupies residues 132 to 152 (LLLACVLISAFTTCLYITLSQ). Over 153 to 172 (ASPFPELVTTRNNTSFNISE) the chain is Extracellular. Residues N164, N165, and N169 are each glycosylated (N-linked (GlcNAc...) asparagine). A helical transmembrane segment spans residues 173 to 193 (GILSLVVSLVLSSSLQFIINV). The Cytoplasmic segment spans residues 194-230 (TSASLLIHSLRRHIQKMQKNATGFWNPQTEAHVGAMK). The chain crosses the membrane as a helical span at residues 231–251 (LMVYFLILYIPYSVATLVQYL). Residues 252–262 (PFYAGMDMGTK) lie on the Extracellular side of the membrane. The helical transmembrane segment at 263–283 (SICLIFATLYSPGHSVLIIIT) threads the bilayer. Residues 284–299 (HPKLKTTAKKILCFKK) lie on the Cytoplasmic side of the membrane.

This sequence belongs to the G-protein coupled receptor T2R family. As to expression, expressed in subsets of taste receptor cells of the tongue and palate epithelium and exclusively in gustducin-positive cells. Expressed on airway ciliated epithelium.

The protein resides in the membrane. It localises to the cell projection. The protein localises to the cilium membrane. Functionally, gustducin-coupled receptor for denatonium and N(6)-propyl-2-thiouracil implicated in the perception of bitter compounds in the oral cavity and the gastrointestinal tract. Signals through PLCB2 and the calcium-regulated cation channel TRPM5. In airway epithelial cells, binding of denatonium increases the intracellular calcium ion concentration and stimulates ciliary beat frequency. The chain is Taste receptor type 2 member 4 (TAS2R4) from Homo sapiens (Human).